The chain runs to 176 residues: MSNKDNDLDDDFSLFREAVQGIKKLPQDTIVQQPNRNTKQKEIKRISREASDSEFYFSDEFVPLLNEEGPTRYARDDVSTYEVKRLRRGVYVPDVFLDMHGMTQQEAKRELGAMIAYCVKNEVHCACVQHGIGKHILKQKTPRWLAQHPDVLAFHQAPLEFGGDGALLVLLSIPEK.

The 76-residue stretch at 97-172 (LDMHGMTQQE…GDGALLVLLS (76 aa)) folds into the Smr domain.

The protein belongs to the SmrB family. Associates with collided ribosomes, but not with correctly translating polysomes.

Acts as a ribosome collision sensor. Detects stalled/collided disomes (pairs of ribosomes where the leading ribosome is stalled and a second ribosome has collided with it) and endonucleolytically cleaves mRNA at the 5' boundary of the stalled ribosome. Stalled/collided disomes form a new interface (primarily via the 30S subunits) that binds SmrB. Cleaved mRNA becomes available for tmRNA ligation, leading to ribosomal subunit dissociation and rescue of stalled ribosomes. The sequence is that of Ribosome rescue factor SmrB from Vibrio vulnificus (strain CMCP6).